We begin with the raw amino-acid sequence, 326 residues long: MSHQLTFADSEFSSKRRQTRKEIFLSRMEQILPWQNMVEVIEPFYPKAGNGRRPYPLETMLRIHCMQHWYNLSDGAMEDALYEIASMRLFARLSLDSALPDRTTIMNFRHLLEQHQLARQLFKTINRWLAEAGVMMTQGTLVDATIIEAPSSTKNKEQQRDPEMHQTKKGNQWHFGMKAHIGVDAKSGLTHSLVTTAANEHDLNQLGNLLHGEEQFVSADAGYQGAPQREELAEVDVDWLIAERPGKVRTLKQHPRKNKTAINIEYMKASIRARVEHPFRIIKRQFGFVKARYKGLLKNDNQLAMLFTLANLFRADQMIRQWERSH.

Belongs to the transposase 11 family.

Its function is as follows. Involved in the transposition of the insertion sequence IS5. This is Transposase InsH for insertion sequence element IS5A (insH1) from Escherichia coli (strain K12).